A 102-amino-acid chain; its full sequence is Large ribosomal subunit protein uL24 (102 aa).

It belongs to the universal ribosomal protein uL24 family. In terms of assembly, part of the 50S ribosomal subunit.

One of two assembly initiator proteins, it binds directly to the 5'-end of the 23S rRNA, where it nucleates assembly of the 50S subunit. Its function is as follows. One of the proteins that surrounds the polypeptide exit tunnel on the outside of the subunit. This chain is Large ribosomal subunit protein uL24, found in Cupriavidus pinatubonensis (strain JMP 134 / LMG 1197) (Cupriavidus necator (strain JMP 134)).